A 394-amino-acid chain; its full sequence is Envelope glycoprotein D (394 aa).

Positions 1–25 are cleaved as a signal peptide; the sequence is MGGAAARLGAVILFVVIVGLHGVRG. The interval 26-57 is interaction with TNFRSF14; the sequence is KYALADASLKMADPNRFRGKDLPVLDQLTDPP. Residues 26–340 lie on the Virion surface side of the membrane; that stretch reads KYALADASLK…YHPPATPNNM (315 aa). His64 lines the Zn(2+) pocket. 3 cysteine pairs are disulfide-bonded: Cys91-Cys214, Cys131-Cys227, and Cys143-Cys152. N-linked (GlcNAc...) asparagine; by host glycans are attached at residues Asn119 and Asn146. Zn(2+) is bound at residue Asp240. Residues 261–305 form a profusion region; the sequence is LKIAGWHGPKAPYTSTLLPPELSETPNATQPELAPEDPEDSALLE. A disordered region spans residues 275 to 301; that stretch reads STLLPPELSETPNATQPELAPEDPEDS. N-linked (GlcNAc...) asparagine; by host glycosylation is present at Asn287. A helical transmembrane segment spans residues 341-361; the sequence is GLIAGAVGGSLLAALVICGIV. The Intravirion portion of the chain corresponds to 362–394; sequence YWMHRRTRKAPKRIRLPHIREDDQPSSHQPLFY.

Belongs to the herpesviridae glycoprotein D family. As to quaternary structure, homodimer. Interacts with host receptor TNFRSF14. Interacts with host receptor NECTIN1. Mutant Rid1 interacts with host receptor NECTIN2. Interacts (via profusion domain) with gB; this interaction occurs in the absence of gH/gL. Interacts (via profusion domain) with gH/gL heterodimer; this interaction occurs in the absence of gB. Associates with the gB-gH/gL-gD complex. Interacts (via C-terminus) with UL11 tegument protein. Interacts (via C-terminus) with VP22 tegument protein; this interaction might be very weak. Interacts with host RSAD2.

Its subcellular location is the virion membrane. It localises to the host Golgi apparatus. Envelope glycoprotein that binds to the host cell entry receptors NECTIN1, TNFRSF14/HVEM and 3-O-sulfated heparan sulfate, promoting the virus entry into host cells. May trigger fusion with host membrane, by recruiting the fusion machinery composed of gB and gH/gL. The protein is Envelope glycoprotein D (gD) of Human herpesvirus 1 (strain KOS) (HHV-1).